Consider the following 232-residue polypeptide: Ornithine carbamoyltransferase (232 aa).

Carbamoyl phosphate-binding positions include glutamine 15, arginine 39, and 66–69 (HPTQ). L-ornithine contacts are provided by residues asparagine 99, aspartate 163, and 167 to 168 (SM). Carbamoyl phosphate-binding positions include 204 to 207 (HCLP) and threonine 232.

It belongs to the aspartate/ornithine carbamoyltransferase superfamily. OTCase family.

It is found in the cytoplasm. It carries out the reaction carbamoyl phosphate + L-ornithine = L-citrulline + phosphate + H(+). It functions in the pathway amino-acid biosynthesis; L-arginine biosynthesis; L-arginine from L-ornithine and carbamoyl phosphate: step 1/3. Its function is as follows. Reversibly catalyzes the transfer of the carbamoyl group from carbamoyl phosphate (CP) to the N(epsilon) atom of ornithine (ORN) to produce L-citrulline. The sequence is that of Ornithine carbamoyltransferase (argF) from Neisseria pharyngis.